Here is a 110-residue protein sequence, read N- to C-terminus: HIT-like protein CPn_0488/CP_0266/CPj0488/CpB0508 (110 aa).

An HIT domain is found at 3–110 (VFKQIIDGLI…LGGRPLGAIA (108 aa)). Positions 95–99 (HLHIH) match the Histidine triad motif motif.

In Chlamydia pneumoniae (Chlamydophila pneumoniae), this protein is HIT-like protein CPn_0488/CP_0266/CPj0488/CpB0508.